Consider the following 252-residue polypeptide: 5-oxoprolinase subunit A (252 aa).

It belongs to the LamB/PxpA family. Forms a complex composed of PxpA, PxpB and PxpC.

It catalyses the reaction 5-oxo-L-proline + ATP + 2 H2O = L-glutamate + ADP + phosphate + H(+). In terms of biological role, catalyzes the cleavage of 5-oxoproline to form L-glutamate coupled to the hydrolysis of ATP to ADP and inorganic phosphate. This chain is 5-oxoprolinase subunit A, found in Staphylococcus epidermidis (strain ATCC 35984 / DSM 28319 / BCRC 17069 / CCUG 31568 / BM 3577 / RP62A).